A 1235-amino-acid chain; its full sequence is DNA polymerase catalytic subunit (1235 aa).

2 disordered regions span residues 640–692 and 1098–1134; these read QGRF…TAGR and ATAP…ASKP. The segment covering 650–661 has biased composition (basic and acidic residues); it reads APKRPAAAREDE. Positions 662–675 are enriched in acidic residues; the sequence is ERPEEEGEDEDERE. Residues 676-691 show a composition bias toward basic and acidic residues; that stretch reads EGGGEREPEGARETAG.

This sequence belongs to the DNA polymerase type-B family. Forms a complex with the ssDNA-binding protein UL29, the DNA polymerase processivity factor, and the alkaline exonuclease. Interacts with the putative helicase-primase complex subunit UL8; this interaction may coordinate leading and lagging strand DNA synthesis at the replication fork.

It localises to the host nucleus. It carries out the reaction DNA(n) + a 2'-deoxyribonucleoside 5'-triphosphate = DNA(n+1) + diphosphate. The enzyme catalyses Endonucleolytic cleavage to 5'-phosphomonoester.. In terms of biological role, replicates viral genomic DNA. The replication complex is composed of six viral proteins: the DNA polymerase, processivity factor, primase, primase-associated factor, helicase, and ssDNA-binding protein. Additionally, the polymerase contains an intrinsic ribonuclease H (RNase H) activity that specifically degrades RNA/DNA heteroduplexes or duplex DNA substrates in the 5' to 3' direction. Therefore, it can catalyze the excision of the RNA primers that initiate the synthesis of Okazaki fragments at a replication fork during viral DNA replication. This is DNA polymerase catalytic subunit from Human herpesvirus 1 (strain Angelotti) (HHV-1).